Here is a 549-residue protein sequence, read N- to C-terminus: Formate--tetrahydrofolate ligase (549 aa).

60–67 (TPYGEGKT) is a binding site for ATP.

This sequence belongs to the formate--tetrahydrofolate ligase family.

The catalysed reaction is (6S)-5,6,7,8-tetrahydrofolate + formate + ATP = (6R)-10-formyltetrahydrofolate + ADP + phosphate. It functions in the pathway one-carbon metabolism; tetrahydrofolate interconversion. The polypeptide is Formate--tetrahydrofolate ligase (Campylobacter concisus (strain 13826)).